We begin with the raw amino-acid sequence, 354 residues long: Cysteine proteinase A (354 aa).

The signal sequence occupies residues 1–24; sequence MARRNPLLFAIVVTILFVVCYGSA. The propeptide at 25 to 125 is activation peptide; sequence LIAQTPPPVD…HKEDVHVDDS (101 aa). Intrachain disulfides connect Cys150–Cys191, Cys184–Cys229, and Cys282–Cys330. Cys153 is an active-site residue. A glycan (N-linked (GlcNAc...) asparagine) is linked at Asn208. Residues His289 and Asn309 contribute to the active site.

It belongs to the peptidase C1 family.

The polypeptide is Cysteine proteinase A (LMCPA) (Leishmania mexicana).